Consider the following 80-residue polypeptide: Defensin-like protein 1 (80 aa).

The first 29 residues, 1-29 (MAKFASIIALLFAALVLFAAFEAPTMVEA), serve as a signal peptide directing secretion. Gln30 bears the Pyrrolidone carboxylic acid mark. Cystine bridges form between Cys33–Cys80, Cys44–Cys65, Cys50–Cys74, and Cys54–Cys76.

Belongs to the DEFL family. In terms of assembly, forms oligomers in its native state.

Its subcellular location is the secreted. Possesses antifungal activity sensitive to inorganic cations. The chain is Defensin-like protein 1 (AFP1) from Raphanus sativus (Radish).